The primary structure comprises 556 residues: Arginine--tRNA ligase (556 aa).

The 'HIGH' region motif lies at 117–127 (PNVAKQMHVGH).

It belongs to the class-I aminoacyl-tRNA synthetase family. As to quaternary structure, monomer.

It is found in the cytoplasm. The enzyme catalyses tRNA(Arg) + L-arginine + ATP = L-arginyl-tRNA(Arg) + AMP + diphosphate. This Cutibacterium acnes (strain DSM 16379 / KPA171202) (Propionibacterium acnes) protein is Arginine--tRNA ligase.